The following is a 122-amino-acid chain: Selenoprotein H (122 aa).

K20 is subject to N6-acetyllysine. Positions 41–44 form a cross-link, cysteinyl-selenocysteine (Cys-Sec); redox-active; it reads CTSU. A non-standard amino acid (selenocysteine) is located at residue U44.

This sequence belongs to the SelWTH family.

In terms of biological role, may be involved in a redox-related process. The polypeptide is Selenoprotein H (Macaca fascicularis (Crab-eating macaque)).